Here is a 216-residue protein sequence, read N- to C-terminus: Ephrin-A1 (216 aa).

Residues 1-28 form the signal peptide; sequence MMELYRAAVQLIVGVGLGVGLWLREAQG. The 133-residue stretch at 29–161 folds into the Ephrin RBD domain; it reads ERHIVFWNSS…RLRVHVSGRT (133 aa). N-linked (GlcNAc...) asparagine glycosylation is present at asparagine 36. Cysteines 61 and 102 form a disulfide. The interval 162-181 is disordered; that stretch reads TPPPVNVHTPRSHIQSDEPE. Serine 195 carries the GPI-anchor amidated serine lipid modification. A propeptide spans 196–216 (removed in mature form); it reads AAPGTPCTLYGLLLAALLLRL.

The protein belongs to the ephrin family. Binds to the receptor tyrosine kinases EPHA2, EPHA4, EPHA5, EPHA6 and EPHA7. Also binds with low affinity to EPHA1.

It localises to the membrane. Its function is as follows. Cell surface GPI-bound ligand for Eph receptors, a family of receptor tyrosine kinases which are crucial for migration, repulsion and adhesion during neuronal, vascular and epithelial development. Binds promiscuously Eph receptors residing on adjacent cells, leading to contact-dependent bidirectional signaling into neighboring cells. This is Ephrin-A1 (efna1) from Xenopus laevis (African clawed frog).